The following is a 227-amino-acid chain: NDR1/HIN1-like protein 10 (227 aa).

The chain crosses the membrane as a helical span at residues 42–62 (VKVIISLIVILGVAALIFWLI). Asn138 and Asn210 each carry an N-linked (GlcNAc...) asparagine glycan.

As to expression, expressed in senescing leaves.

The protein localises to the cell membrane. In terms of biological role, may play a role in plant immunity. The chain is NDR1/HIN1-like protein 10 from Arabidopsis thaliana (Mouse-ear cress).